Reading from the N-terminus, the 186-residue chain is MPVKSDRWIRRMALEHGMIEPFVDHQVRKGVISYGLTSYGYDMRVTNHFKVFTNVYNALVDPKKFDPRSFVDIEADYVDIPPNSFALAQSLEYFRIPRTVSCIVIGKSSYARCGIIINVTPLEPEWEGHVTIEISNTTPLPARIYAHEGIGQVLFLESDEPCEVSYADKKGKYQGQTGIVLPRIDP.

107-112 (KSSYAR) contacts dCTP. Glu133 (proton donor/acceptor) is an active-site residue. The dCTP site is built by Gln152, Tyr166, and Gln176.

This sequence belongs to the dCTP deaminase family. In terms of assembly, homotrimer.

The catalysed reaction is dCTP + H2O + H(+) = dUTP + NH4(+). The protein operates within pyrimidine metabolism; dUMP biosynthesis; dUMP from dCTP (dUTP route): step 1/2. Catalyzes the deamination of dCTP to dUTP. In Chloroflexus aggregans (strain MD-66 / DSM 9485), this protein is dCTP deaminase.